Reading from the N-terminus, the 240-residue chain is Uridylate kinase (240 aa).

12 to 15 is a binding site for ATP; the sequence is KLSG. The segment at 20-25 is involved in allosteric activation by GTP; it reads GDQGYG. Gly-54 lines the UMP pocket. ATP-binding residues include Gly-55 and Arg-59. UMP contacts are provided by residues Asp-74 and 135–142; that span reads TGNPYFST. ATP-binding residues include Asn-163, Tyr-169, and Asp-172.

This sequence belongs to the UMP kinase family. As to quaternary structure, homohexamer.

The protein localises to the cytoplasm. The enzyme catalyses UMP + ATP = UDP + ADP. It participates in pyrimidine metabolism; CTP biosynthesis via de novo pathway; UDP from UMP (UMPK route): step 1/1. Its activity is regulated as follows. Allosterically activated by GTP. Inhibited by UTP. Catalyzes the reversible phosphorylation of UMP to UDP. The sequence is that of Uridylate kinase from Oceanobacillus iheyensis (strain DSM 14371 / CIP 107618 / JCM 11309 / KCTC 3954 / HTE831).